We begin with the raw amino-acid sequence, 97 residues long: DNA/RNA-binding protein Alba (97 aa).

An N6-acetyllysine modification is found at Lys-15.

It belongs to the histone-like Alba family. Acetylated. Acetylation at Lys-15 decreases DNA-binding affinity.

Its subcellular location is the cytoplasm. It localises to the chromosome. Its function is as follows. Binds double-stranded DNA tightly but without sequence specificity. Involved in DNA compaction. The protein is DNA/RNA-binding protein Alba of Sulfolobus acidocaldarius (strain ATCC 33909 / DSM 639 / JCM 8929 / NBRC 15157 / NCIMB 11770).